The primary structure comprises 321 residues: Lipoyl synthase (321 aa).

Residues Cys-68, Cys-73, Cys-79, Cys-94, Cys-98, Cys-101, and Ser-308 each contribute to the [4Fe-4S] cluster site. Residues 80-297 enclose the Radical SAM core domain; the sequence is FNHGTATFMI…KEVALELGFT (218 aa).

This sequence belongs to the radical SAM superfamily. Lipoyl synthase family. The cofactor is [4Fe-4S] cluster.

The protein resides in the cytoplasm. The enzyme catalyses [[Fe-S] cluster scaffold protein carrying a second [4Fe-4S](2+) cluster] + N(6)-octanoyl-L-lysyl-[protein] + 2 oxidized [2Fe-2S]-[ferredoxin] + 2 S-adenosyl-L-methionine + 4 H(+) = [[Fe-S] cluster scaffold protein] + N(6)-[(R)-dihydrolipoyl]-L-lysyl-[protein] + 4 Fe(3+) + 2 hydrogen sulfide + 2 5'-deoxyadenosine + 2 L-methionine + 2 reduced [2Fe-2S]-[ferredoxin]. It functions in the pathway protein modification; protein lipoylation via endogenous pathway; protein N(6)-(lipoyl)lysine from octanoyl-[acyl-carrier-protein]: step 2/2. In terms of biological role, catalyzes the radical-mediated insertion of two sulfur atoms into the C-6 and C-8 positions of the octanoyl moiety bound to the lipoyl domains of lipoate-dependent enzymes, thereby converting the octanoylated domains into lipoylated derivatives. This chain is Lipoyl synthase, found in Vibrio cholerae serotype O1 (strain ATCC 39315 / El Tor Inaba N16961).